Reading from the N-terminus, the 503-residue chain is UPF0522 protein C (503 aa).

Positions 1-18 (MKLFILIILSICLALVNS) are cleaved as a signal peptide. 3 N-linked (GlcNAc...) asparagine glycosylation sites follow: Asn-330, Asn-337, and Asn-370.

Belongs to the UPF0522 family.

It localises to the secreted. This Dictyostelium discoideum (Social amoeba) protein is UPF0522 protein C.